We begin with the raw amino-acid sequence, 406 residues long: Tryptophan synthase beta chain (406 aa).

Residue K99 is modified to N6-(pyridoxal phosphate)lysine.

It belongs to the TrpB family. As to quaternary structure, tetramer of two alpha and two beta chains. Pyridoxal 5'-phosphate serves as cofactor.

It carries out the reaction (1S,2R)-1-C-(indol-3-yl)glycerol 3-phosphate + L-serine = D-glyceraldehyde 3-phosphate + L-tryptophan + H2O. It functions in the pathway amino-acid biosynthesis; L-tryptophan biosynthesis; L-tryptophan from chorismate: step 5/5. Its function is as follows. The beta subunit is responsible for the synthesis of L-tryptophan from indole and L-serine. The sequence is that of Tryptophan synthase beta chain from Phenylobacterium zucineum (strain HLK1).